Reading from the N-terminus, the 510-residue chain is Protein disulfide-isomerase (510 aa).

An N-terminal signal peptide occupies residues methionine 1–glycine 20. The 110-residue stretch at histidine 27–glycine 136 folds into the Thioredoxin 1 domain. Residues cysteine 55 and cysteine 58 each act as nucleophile in the active site. A disulfide bridge links cysteine 55 with cysteine 58. Position 202 is an N6-acetyllysine (lysine 202). An N6-succinyllysine mark is found at lysine 224 and lysine 273. Phosphoserine is present on residues serine 333 and serine 359. Residues glycine 351–glutamine 477 enclose the Thioredoxin 2 domain. Active-site nucleophile residues include cysteine 399 and cysteine 402. Cysteine 399 and cysteine 402 are disulfide-bonded. Serine 429 is modified (phosphoserine). A disordered region spans residues glutamate 473 to leucine 510. A compositionally biased stretch (acidic residues) spans alanine 480–aspartate 502. The short motif at lysine 507–leucine 510 is the Prevents secretion from ER element.

This sequence belongs to the protein disulfide isomerase family. As to quaternary structure, heterodimer; heterodimerizes with the protein microsomal triglyceride transfer MTTP. Homodimer. Monomers and homotetramers may also occur. Interacts with P4HA2, forming a heterotetramer consisting of 2 alpha subunits (P4HA2) and 2 beta (P4HB), where P4HB plays the role of a structural subunit; this tetramer catalyzes the formation of 4-hydroxyproline in collagen. Also constitutes the structural subunit of the microsomal triacylglycerol transfer protein MTTP in mammalian cells. Stabilizes both enzymes and retain them in the ER without contributing to the catalytic activity. Binds UBQLN1. Interacts with ERO1B. Interacts with ILDR2. Interacts with ERN1/IRE1A (via N-terminus); the interaction is enhanced by phosphorylation of P4HB by FAM20C in response to endoplasmic reticulum stress and results in attenuation of ERN1 activity. Post-translationally, phosphorylation of Ser-359 by FAM20C is induced by endoplasmic reticulum stress and results in a functional switch from oxidoreductase to molecular chaperone. It also promotes interaction with ERN1.

The protein localises to the endoplasmic reticulum. It localises to the endoplasmic reticulum lumen. It is found in the melanosome. Its subcellular location is the cell membrane. It carries out the reaction Catalyzes the rearrangement of -S-S- bonds in proteins.. This multifunctional protein catalyzes the formation, breakage and rearrangement of disulfide bonds. At the cell surface, seems to act as a reductase that cleaves disulfide bonds of proteins attached to the cell. May therefore cause structural modifications of exofacial proteins. Inside the cell, seems to form/rearrange disulfide bonds of nascent proteins. At high concentrations and following phosphorylation by FAM20C, functions as a chaperone that inhibits aggregation of misfolded proteins. At low concentrations, facilitates aggregation (anti-chaperone activity). May be involved with other chaperones in the structural modification of the TG precursor in hormone biogenesis. Also acts as a structural subunit of various enzymes such as prolyl 4-hydroxylase and microsomal triacylglycerol transfer protein MTTP. Receptor for LGALS9; the interaction retains P4HB at the cell surface of Th2 T helper cells, increasing disulfide reductase activity at the plasma membrane, altering the plasma membrane redox state and enhancing cell migration. The protein is Protein disulfide-isomerase (P4HB) of Bos taurus (Bovine).